The primary structure comprises 246 residues: 1-(5-phosphoribosyl)-5-[(5-phosphoribosylamino)methylideneamino] imidazole-4-carboxamide isomerase (246 aa).

The active-site Proton acceptor is the aspartate 10. Aspartate 131 (proton donor) is an active-site residue.

This sequence belongs to the HisA/HisF family.

Its subcellular location is the cytoplasm. It catalyses the reaction 1-(5-phospho-beta-D-ribosyl)-5-[(5-phospho-beta-D-ribosylamino)methylideneamino]imidazole-4-carboxamide = 5-[(5-phospho-1-deoxy-D-ribulos-1-ylimino)methylamino]-1-(5-phospho-beta-D-ribosyl)imidazole-4-carboxamide. It functions in the pathway amino-acid biosynthesis; L-histidine biosynthesis; L-histidine from 5-phospho-alpha-D-ribose 1-diphosphate: step 4/9. The polypeptide is 1-(5-phosphoribosyl)-5-[(5-phosphoribosylamino)methylideneamino] imidazole-4-carboxamide isomerase (Acidiphilium cryptum (strain JF-5)).